A 339-amino-acid polypeptide reads, in one-letter code: DNA-directed RNA polymerase subunit alpha (339 aa).

An alpha N-terminal domain (alpha-NTD) region spans residues 1 to 233 (MVREEVAGST…DLFLPFLHAE (233 aa)). The interval 266–339 (GIPLNCIFID…MDLLKNKLSF (74 aa)) is alpha C-terminal domain (alpha-CTD).

This sequence belongs to the RNA polymerase alpha chain family. As to quaternary structure, in plastids the minimal PEP RNA polymerase catalytic core is composed of four subunits: alpha, beta, beta', and beta''. When a (nuclear-encoded) sigma factor is associated with the core the holoenzyme is formed, which can initiate transcription.

Its subcellular location is the plastid. It is found in the chloroplast. It carries out the reaction RNA(n) + a ribonucleoside 5'-triphosphate = RNA(n+1) + diphosphate. Functionally, DNA-dependent RNA polymerase catalyzes the transcription of DNA into RNA using the four ribonucleoside triphosphates as substrates. The protein is DNA-directed RNA polymerase subunit alpha of Agrostis stolonifera (Creeping bentgrass).